The chain runs to 208 residues: Thymidylate kinase (208 aa).

11–18 (GIEGAGKT) lines the ATP pocket.

Belongs to the thymidylate kinase family.

It catalyses the reaction dTMP + ATP = dTDP + ADP. Its function is as follows. Phosphorylation of dTMP to form dTDP in both de novo and salvage pathways of dTTP synthesis. The sequence is that of Thymidylate kinase from Hahella chejuensis (strain KCTC 2396).